The sequence spans 303 residues: Aspartate carbamoyltransferase catalytic subunit (303 aa).

Carbamoyl phosphate is bound by residues Arg49 and Thr50. Lys77 contributes to the L-aspartate binding site. Residues Arg99, His126, and Gln129 each contribute to the carbamoyl phosphate site. 2 residues coordinate L-aspartate: Arg159 and Arg211. Carbamoyl phosphate contacts are provided by Ser252 and Pro253.

Belongs to the aspartate/ornithine carbamoyltransferase superfamily. ATCase family. As to quaternary structure, heterododecamer (2C3:3R2) of six catalytic PyrB chains organized as two trimers (C3), and six regulatory PyrI chains organized as three dimers (R2).

It catalyses the reaction carbamoyl phosphate + L-aspartate = N-carbamoyl-L-aspartate + phosphate + H(+). Its pathway is pyrimidine metabolism; UMP biosynthesis via de novo pathway; (S)-dihydroorotate from bicarbonate: step 2/3. Functionally, catalyzes the condensation of carbamoyl phosphate and aspartate to form carbamoyl aspartate and inorganic phosphate, the committed step in the de novo pyrimidine nucleotide biosynthesis pathway. The sequence is that of Aspartate carbamoyltransferase catalytic subunit from Listeria welshimeri serovar 6b (strain ATCC 35897 / DSM 20650 / CCUG 15529 / CIP 8149 / NCTC 11857 / SLCC 5334 / V8).